The following is a 367-amino-acid chain: Glutamate 5-kinase (367 aa).

K10 is an ATP binding site. The substrate site is built by S50, D137, and N149. Residues 169–170 (TD) and 211–217 (TGGMGTK) contribute to the ATP site. Positions 275-353 (AGEITVDEGA…QQIDAILGYE (79 aa)) constitute a PUA domain.

This sequence belongs to the glutamate 5-kinase family.

It localises to the cytoplasm. It carries out the reaction L-glutamate + ATP = L-glutamyl 5-phosphate + ADP. It participates in amino-acid biosynthesis; L-proline biosynthesis; L-glutamate 5-semialdehyde from L-glutamate: step 1/2. In terms of biological role, catalyzes the transfer of a phosphate group to glutamate to form L-glutamate 5-phosphate. In Enterobacter sp. (strain 638), this protein is Glutamate 5-kinase.